The following is a 336-amino-acid chain: Dihydroorotate dehydrogenase (quinone) (336 aa).

Residues 62–66 (AGLDK) and Thr86 contribute to the FMN site. Residue Lys66 coordinates substrate. A substrate-binding site is contributed by 111 to 115 (NRMGF). FMN contacts are provided by Asn139 and Asn172. Asn172 contacts substrate. The active-site Nucleophile is the Ser175. Position 177 (Asn177) interacts with substrate. Positions 217 and 245 each coordinate FMN. Residue 246–247 (NT) coordinates substrate. FMN contacts are provided by residues Gly268, Gly297, and 318-319 (YS).

The protein belongs to the dihydroorotate dehydrogenase family. Type 2 subfamily. As to quaternary structure, monomer. The cofactor is FMN.

The protein resides in the cell membrane. It catalyses the reaction (S)-dihydroorotate + a quinone = orotate + a quinol. It participates in pyrimidine metabolism; UMP biosynthesis via de novo pathway; orotate from (S)-dihydroorotate (quinone route): step 1/1. Catalyzes the conversion of dihydroorotate to orotate with quinone as electron acceptor. The protein is Dihydroorotate dehydrogenase (quinone) of Edwardsiella ictaluri (strain 93-146).